A 190-amino-acid polypeptide reads, in one-letter code: Potassium-transporting ATPase KdpC subunit (190 aa).

A helical membrane pass occupies residues 10 to 30 (TFLFLLLITGGVYPLLTTALG).

Belongs to the KdpC family. In terms of assembly, the system is composed of three essential subunits: KdpA, KdpB and KdpC.

It localises to the cell inner membrane. Part of the high-affinity ATP-driven potassium transport (or Kdp) system, which catalyzes the hydrolysis of ATP coupled with the electrogenic transport of potassium into the cytoplasm. This subunit acts as a catalytic chaperone that increases the ATP-binding affinity of the ATP-hydrolyzing subunit KdpB by the formation of a transient KdpB/KdpC/ATP ternary complex. This Escherichia coli O6:H1 (strain CFT073 / ATCC 700928 / UPEC) protein is Potassium-transporting ATPase KdpC subunit.